Reading from the N-terminus, the 205-residue chain is Glycerol-3-phosphate acyltransferase (205 aa).

6 helical membrane-spanning segments follow: residues 5-25 (LIAT…YIIA), 56-76 (ICVL…AIAL), 84-104 (VPAL…YFGF), 114-134 (IGVV…VAIL), 144-164 (LGSL…LPFF), and 165-185 (HYPL…LWRH).

Belongs to the PlsY family. In terms of assembly, probably interacts with PlsX.

The protein localises to the cell membrane. It carries out the reaction an acyl phosphate + sn-glycerol 3-phosphate = a 1-acyl-sn-glycero-3-phosphate + phosphate. It functions in the pathway lipid metabolism; phospholipid metabolism. Its function is as follows. Catalyzes the transfer of an acyl group from acyl-phosphate (acyl-PO(4)) to glycerol-3-phosphate (G3P) to form lysophosphatidic acid (LPA). This enzyme utilizes acyl-phosphate as fatty acyl donor, but not acyl-CoA or acyl-ACP. This is Glycerol-3-phosphate acyltransferase from Shouchella clausii (strain KSM-K16) (Alkalihalobacillus clausii).